We begin with the raw amino-acid sequence, 836 residues long: Transcriptional regulatory protein UME6 (836 aa).

Positions 1–14 are enriched in basic and acidic residues; sequence MLDKARSQSKHMDE. Disordered stretches follow at residues 1–77, 92–168, 218–332, and 381–464; these read MLDK…IESL, STCA…CNGH, HLPP…DDQC, and NESS…GFFY. Polar residues-rich tracts occupy residues 39–48, 61–77, and 92–112; these read SRATLMNSSQ, GANS…IESL, and STCA…SLKV. Phosphoserine is present on Ser114. Positions 117–126 are enriched in basic and acidic residues; the sequence is DIKDDPKEND. A phosphoserine mark is found at Ser141, Ser150, and Ser228. A compositionally biased stretch (low complexity) spans 226–236; sequence AVSSPGTTAAG. The segment covering 258 to 272 has biased composition (polar residues); the sequence is TSANKNNGKTTNSPM. Over residues 273 to 305 the composition is skewed to low complexity; the sequence is SILSRNNSTNNNDNNSIQSSDSRESSNNNEIGG. 2 positions are modified to phosphoserine: Ser316 and Ser318. Over residues 316–325 the composition is skewed to polar residues; the sequence is SPSNDSQVQH. Over residues 381–398 the composition is skewed to low complexity; that stretch reads NESSSNNASSNTDTPTNS. A compositionally biased stretch (polar residues) spans 399–414; it reads RHANTSSSITSRNNFQ. Over residues 426 to 446 the composition is skewed to low complexity; it reads PTSASSFTSTNNNNPQRNNIN. The segment at 508–594 is SIN3-binding; it reads NSASSSTKLD…QPIFESNNST (87 aa). The disordered stretch occupies residues 636–766; it reads NGKRIDRRLS…ATSSTSQGTR (131 aa). Ser645 carries the post-translational modification Phosphoserine. Residues 670 to 679 are compositionally biased toward polar residues; sequence VASQTNSDYN. The segment covering 680-702 has biased composition (low complexity); sequence SLGESSTSSAPSSPSLKASSGLA. Basic residues predominate over residues 718–739; that stretch reads SKGKNVKPKAKSKAKQSSKKRP. Residues 740–751 show a composition bias toward low complexity; it reads NNTTSKSKANNS. The zn(2)-C6 fungal-type DNA-binding region spans 771–798; sequence CWICRLRKKKCTEERPHCFNCERLKLDC.

As to quaternary structure, component of the RPD3C(L) complex composed of at least ASH1, CTI6, DEP1, PHO23, RPD3, RXT2, RXT3, SAP30, SDS3, SIN3, UME1 and UME6. Interacts with RIM11, MCK1 and IME1. Post-translationally, phosphorylated by RIM11 and MCK1.

It is found in the nucleus. Component of the RPD3C(L) histone deacetylase complex (HDAC) responsible for the deacetylation of lysine residues on the N-terminal part of the core histones (H2A, H2B, H3 and H4). Histone deacetylation gives a tag for epigenetic repression and plays an important role in transcriptional regulation, cell cycle progression and developmental events. Binds to the URS1 site (5'-AGCCGCCGA-3') and recruits the RPD3 histone deacetylase complex to the promoters to negatively regulate the expression of many genes including CAR1 (arginase), several required for sporulation, mating type switching, inositol metabolism, and oxidative carbon metabolism. Also recruits the ISW2 chromatin remodeling complex to promoters in a second gene repression pathway. Associates with the master regulator of meiosis IME1 in order to activate the expression of meiosis genes. Has both a positive and negative role in regulating phospholipid biosynthesis. The protein is Transcriptional regulatory protein UME6 (UME6) of Saccharomyces cerevisiae (strain ATCC 204508 / S288c) (Baker's yeast).